The following is a 283-amino-acid chain: MLIIETLPLLRQQIRRLRMEGKRVALVPTMGNLHDGHMKLVDEAKARADVVVVSIFVNPMQFDRPEDLARYPRTLQEDCEKLNKRKVDLVFAPSVKEIYPNGTETHTYVDVPGLSTMLEGASRPGHFRGVSTIVSKLFNLVQPDIACFGEKDFQQLALIRKMVADMGFDIEIVGVPIMRAKDGLALSSRNGYLTAEQRKIAPGLYKVLSSIADKLQAGERDLDEIIAIAGQELNEKGFRADDIQIRDADTLLEVSENSKRAVILVAAWLGDARLIDNKMVELA.

30 to 37 (MGNLHDGH) contacts ATP. His37 functions as the Proton donor in the catalytic mechanism. Gln61 provides a ligand contact to (R)-pantoate. Gln61 contacts beta-alanine. 149-152 (GEKD) serves as a coordination point for ATP. Gln155 lines the (R)-pantoate pocket. 186–189 (LSSR) lines the ATP pocket.

It belongs to the pantothenate synthetase family. As to quaternary structure, homodimer.

The protein localises to the cytoplasm. It catalyses the reaction (R)-pantoate + beta-alanine + ATP = (R)-pantothenate + AMP + diphosphate + H(+). Its pathway is cofactor biosynthesis; (R)-pantothenate biosynthesis; (R)-pantothenate from (R)-pantoate and beta-alanine: step 1/1. Functionally, catalyzes the condensation of pantoate with beta-alanine in an ATP-dependent reaction via a pantoyl-adenylate intermediate. The sequence is that of Pantothenate synthetase from Escherichia coli O6:H1 (strain CFT073 / ATCC 700928 / UPEC).